The following is a 621-amino-acid chain: (-)-beta-phellandrene synthase 1, chloroplastic (621 aa).

The transit peptide at 1 to 49 directs the protein to the chloroplast; it reads MALALVSVAPLVSMRRSLFSSPYELKSIDKTIPNLVMCRKRMSGTPSIR. Mg(2+)-binding residues include aspartate 372, aspartate 376, and aspartate 524. The DDXXD motif signature appears at 372-376; it reads DDIYD.

This sequence belongs to the terpene synthase family. Tpsd subfamily. Requires Mg(2+) as cofactor. It depends on Mn(2+) as a cofactor.

It is found in the plastid. The protein resides in the chloroplast. It catalyses the reaction (2E)-geranyl diphosphate = (-)-beta-phellandrene + diphosphate. It functions in the pathway terpene metabolism; oleoresin biosynthesis. Its pathway is secondary metabolite biosynthesis; terpenoid biosynthesis. Functionally, monoterpene synthase (TPS) involved in the biosynthesis of monoterpene natural products included in conifer oleoresin secretions and volatile emissions; these compounds contribute to biotic and abiotic stress defense against herbivores and pathogens. Catalyzes the conversion of (2E)-geranyl diphosphate (GPP) to (-)-beta-phellandrene and, to a lower extent, to (-)-alpha-phellandrene. The polypeptide is (-)-beta-phellandrene synthase 1, chloroplastic (Pinus contorta (Shore pine)).